The chain runs to 299 residues: MAERTYRINIAAELAGVRVELIRAWERRYGVLTPRRTPAGYRAYTDRDVAVLKQLKRLTDEGVAISEAAKLLPQLMEGLEAEVAGRGASQDARPHAETWRESMLAATQAYDQPRVSDVLDEVLAALPPLKAFDEVLAPLLCDVGERWESGTLTVAQEHLVSQMVRARLVSLLHAAPLGRHRHGVLACFPEEEHEMGLLGAALRLRHLGVRVTLLGQRVPAEDLGRAVLALRPDFVGLSTVASRSAEDFEDTLTRLRQALPRGLPVWVGGAAARSHQAVCERLAVHVFQGEEDWDRLAGT.

One can recognise an HTH merR-type domain in the interval 5-74 (TYRINIAAEL…ISEAAKLLPQ (70 aa)). Positions 8–27 (INIAAELAGVRVELIRAWER) form a DNA-binding region, H-T-H motif. The B12-binding domain maps to 180-299 (HRHGVLACFP…EEDWDRLAGT (120 aa)).

It belongs to the CarA/CarH B12-binding photoregulator family. Forms oligomers. Interacts with CarS.

With respect to regulation, requires cobalamin (vitamin B12) for repressor activity. In the dark, binding of cobalamin to CarH induces its oligomerization, which enhances binding to the DNA and repressor activity. Light causes cobalamin photolysis and disruption of the cobalamin-CarH complex, which decreases interaction with DNA and allows transcription of the carB operon. Interaction with CarS also prevents binding to DNA. Functionally, negative regulator of the carB operon in the dark. Binds specifically to the CarA operator, in the region around the carB promoter, which blocks access to the RNA polymerase. In Myxococcus xanthus, this protein is HTH-type transcriptional repressor CarH (carH).